Here is a 354-residue protein sequence, read N- to C-terminus: Ferrochelatase (354 aa).

The Fe cation site is built by histidine 214 and glutamate 295.

It belongs to the ferrochelatase family.

It localises to the cytoplasm. The enzyme catalyses heme b + 2 H(+) = protoporphyrin IX + Fe(2+). It participates in porphyrin-containing compound metabolism; protoheme biosynthesis; protoheme from protoporphyrin-IX: step 1/1. In terms of biological role, catalyzes the ferrous insertion into protoporphyrin IX. This Burkholderia orbicola (strain MC0-3) protein is Ferrochelatase.